The chain runs to 384 residues: MDGETAGEKGSLVPPPGALGGSALGGAPAPGVRREPKKYAVTDDYQLSKQVLGLGVNGKVLECYHRRSGQKCALKLLYDSPKARQEVDHHWQASGGPHIVRILDVYENMHHGKRCLLIVMECMEGGELFSRIQERGDQAFTEREAAEIMRDIGTAIQFLHSRNIAHRDVKPENLLYTSKEKDAVLKLTDFGFAKETTQNALQTPCYTPYYVAPEVLGPEKYDKSCDMWSLGVIMYILLCGFPPFYSNTGQAISPGMKRRIRLGQYSFPNPEWLDVSEDAKQLIRLLLKTDPTERLTIMQFMNHPWINQSMVVPQTPLYTARVLQEDKDHWDDVKEEMTSALATMRVDYDQVKIKDLKTSNNRLLNKRRKKQAGSSSASQGCNNQ.

Residue Met-1 is modified to N-acetylmethionine. Residues 1–33 (MDGETAGEKGSLVPPPGALGGSALGGAPAPGVR) are disordered. The Protein kinase domain occupies 46–306 (QLSKQVLGLG…IMQFMNHPWI (261 aa)). ATP contacts are provided by residues 52 to 60 (LGLGVNGKV) and Lys-75. Asp-168 serves as the catalytic Proton acceptor. Phosphothreonine; by MAPK14 is present on Thr-203. The residue at position 253 (Ser-253) is a Phosphoserine; by MAPK14. Position 309 is a phosphoserine; by autocatalysis (Ser-309). The segment at 309 to 345 (SMVVPQTPLYTARVLQEDKDHWDDVKEEMTSALATMR) is autoinhibitory helix. Residue Thr-315 is modified to Phosphothreonine; by MAPK14. The Nuclear export signal (NES) motif lies at 337 to 346 (MTSALATMRV). The interval 347 to 371 (DYDQVKIKDLKTSNNRLLNKRRKKQ) is p38 MAPK-binding site. 2 consecutive short sequence motifs (bipartite nuclear localization signal) follow at residues 352–355 (KIKD) and 366–370 (KRRKK). The disordered stretch occupies residues 359-384 (SNNRLLNKRRKKQAGSSSASQGCNNQ). Residues 372–384 (AGSSSASQGCNNQ) show a composition bias toward polar residues.

It belongs to the protein kinase superfamily. CAMK Ser/Thr protein kinase family. In terms of assembly, heterodimer with p38-alpha/MAPK14. The heterodimer with p38-alpha/MAPK14 forms a stable complex: molecules are positioned 'face to face' so that the ATP-binding sites of both kinases are at the heterodimer interface. Interacts with TCF3 and with polycomb proteins, such as PCH2 and BMI1/PCGF4. Phosphorylated and activated by MAPK1/ERK2 and MAPK3/ERK1. Phosphorylated and activated by MAP kinase p38-alpha/MAPK14 at Thr-201, Ser-251 and Thr-313. Isoform 3 is degraded following phosphorylation at Thr-203. As to expression, ubiquitously expressed (at protein level). Isoform 3 is expressed in skeletal muscles and heart.

It localises to the nucleus. It is found in the cytoplasm. It catalyses the reaction L-seryl-[protein] + ATP = O-phospho-L-seryl-[protein] + ADP + H(+). The catalysed reaction is L-threonyl-[protein] + ATP = O-phospho-L-threonyl-[protein] + ADP + H(+). Its activity is regulated as follows. Activated following phosphorylation by p38-alpha/MAPK14 following various stresses. Inhibited by ligand 5B (2'-[2-(1,3-benzodioxol-5-yl)pyrimidin-4-yl]-5',6'-dihydrospiro[piperidine-4,7'-pyrrolo[3,2-c]pyridin]- 4'(1'h)-one) and ligand P4O (2-[2-(2-fluorophenyl)pyridin-4-yl]-1,5,6,7-tetrahydro- 4h-pyrrolo[3,2-c]pyridin-4-one), 2 ATP-competitive inhibitors. Its function is as follows. Stress-activated serine/threonine-protein kinase involved in cytokines production, endocytosis, cell migration, chromatin remodeling and transcriptional regulation. Following stress, it is phosphorylated and activated by MAP kinase p38-alpha/MAPK14, leading to phosphorylation of substrates. Phosphorylates serine in the peptide sequence, Hyd-X-R-X(2)-S, where Hyd is a large hydrophobic residue. MAPKAPK2 and MAPKAPK3, share the same function and substrate specificity, but MAPKAPK3 kinase activity and level in protein expression are lower compared to MAPKAPK2. Phosphorylates HSP27/HSPB1, KRT18, KRT20, RCSD1, RPS6KA3, TAB3 and TTP/ZFP36. Mediates phosphorylation of HSP27/HSPB1 in response to stress, leading to dissociate HSP27/HSPB1 from large small heat-shock protein (sHsps) oligomers and impair their chaperone activities and ability to protect against oxidative stress effectively. Involved in inflammatory response by regulating tumor necrosis factor (TNF) and IL6 production post-transcriptionally: acts by phosphorylating AU-rich elements (AREs)-binding proteins, such as TTP/ZFP36, leading to regulate the stability and translation of TNF and IL6 mRNAs. Phosphorylation of TTP/ZFP36, a major post-transcriptional regulator of TNF, promotes its binding to 14-3-3 proteins and reduces its ARE mRNA affinity leading to inhibition of dependent degradation of ARE-containing transcript. Involved in toll-like receptor signaling pathway (TLR) in dendritic cells: required for acute TLR-induced macropinocytosis by phosphorylating and activating RPS6KA3. Also acts as a modulator of Polycomb-mediated repression. The polypeptide is MAP kinase-activated protein kinase 3 (Mapkapk3) (Mus musculus (Mouse)).